We begin with the raw amino-acid sequence, 253 residues long: MNGPIIMTREERMKIVHEIKERILDKYGDDVKAIGVYGSLGRQTDGPYSDIEMMCVMSTEEAEFSHEWTTGEWKVEVNFDSEEILLDYASQVESDWPLTHGQFFSILPIYDSGGYLEKVYQTAKSVEAQTFHDAICALIVEELFEYAGKWRNIRVQGPTTFLPSLTVQVAMAGAMLIGLHHRICYTTSASVLTEAVKQSDLPSGYDHLCQFVMSGQLSDSEKLLESLENFWNGIQEWTERHGYIVDVSKRIPF.

Positions 1–127 (MNGPIIMTRE…KVYQTAKSVE (127 aa)) are N-terminal domain. Ser39, Arg42, Ser49, Asp50, and Glu52 together coordinate ATP. Asp50 and Glu52 together coordinate Mg(2+). 2 residues coordinate neomycin B: Glu52 and Glu67. Glu67, Lys74, Glu76, Glu141, and Glu145 together coordinate kanamycin A. Positions 128–241 (AQTFHDAICA…NGIQEWTERH (114 aa)) are C-terminal domain. ATP-binding residues include Glu145, Lys149, and Thr187. Glu145 contributes to the Mg(2+) binding site. Glu145 acts as the Proton acceptor in catalysis.

Homodimer. It depends on Mg(2+) as a cofactor.

It carries out the reaction amikacin + ATP = 4'-adenylylamikacin + diphosphate. The catalysed reaction is kanamycin A + ATP = 4'-adenylylkanamycin A + diphosphate. It catalyses the reaction neomycin B + ATP = 4'-adenylylneomycin B + diphosphate. The enzyme catalyses paromomycin + ATP = 4'-adenylylparomomycin + diphosphate. It carries out the reaction ribostamycin + ATP = 4'-adenylylribostamycin + diphosphate. The catalysed reaction is tobramycin + ATP = 4'-adenylyltobramycin + diphosphate. It catalyses the reaction kanamycin A + CTP = 4'-cytidylylkanamycin A + diphosphate. The enzyme catalyses kanamycin A + GTP = 4'-guanylylkanamycin A + diphosphate. It carries out the reaction kanamycin A + ITP = 4'-inosinylylkanamycin A + diphosphate. The catalysed reaction is dTTP + kanamycin A = 4'-thymidylylkanamycin A + diphosphate. It catalyses the reaction kanamycin A + UTP = 4'-uridylylkanamycin A + diphosphate. The enzyme catalyses kanamycin A + dATP = 4'-(2'-deoxyadenylyl)kanamycin A + diphosphate. It carries out the reaction kanamycin A + dCTP = 4'-(2'-deoxycytidylyl)kanamycin A + diphosphate. The catalysed reaction is kanamycin A + dGTP = 4'-(2'-deoxyguanylyl)kanamycin A + diphosphate. It catalyses the reaction dUTP + kanamycin A = 4'-(2'-deoxyuridylyl)kanamycin A + diphosphate. The enzyme catalyses amikacin + GTP = 4'-guanylylamikacin + diphosphate. It carries out the reaction amikacin + ITP = 4'-inosinylylamikacin + diphosphate. The catalysed reaction is amikacin + CTP = 4'-cytidylylamikacin + diphosphate. It catalyses the reaction amikacin + UTP = 4'-uridylylamikacin + diphosphate. The enzyme catalyses amikacin + dTTP = 4'-thymidylylamikacin + diphosphate. In terms of biological role, inactivates aminoglycoside antibiotics such as kanamycin by catalyzing the transfer of a nucleotidyl group from a wide variety of nucleoside triphosphates ((d)ATP, (d)CTP, (d)GTP, ITP, TTP and (d)UTP) to the 4'-hydroxyl group of the aminoglycoside. In vitro, antibiotics without the 4'-hydroxyl but possessing a 4''-hydroxyl group (e.g. sisomicin and gentamicin) are also modifed but with poor specificity. The 3' position of the NTP ribose ring does not tolerate large substitutions (e.g. ddATP) and dNTPs and TTP are better substrates than their NTP counterparts. A short (2.35 Angstrom) hydrogen bond initially facilitates tight binding of the substrate (between Glu-52 and antibiotic) that is subsequently disrupted by the assembly of the active ternary complex. This enables the release of products post-catalysis, a 'catch and release' mechanism. The polypeptide is Aminoglycoside nucleotidyltransferase (4') (knt) (Staphylococcus aureus).